Consider the following 315-residue polypeptide: Protein ADP-ribosyltransferase (315 aa).

The 287-residue stretch at L13 to T299 folds into the Deacetylase sirtuin-type domain. Residues A40, T123–D126, and Q143 contribute to the NAD(+) site. 4 residues coordinate Zn(2+): C151, C155, C186, and C189. NAD(+) is bound by residues Y238–T240, N264, Y268, and I285.

The protein belongs to the sirtuin family. Class M subfamily. The cofactor is Zn(2+).

It carries out the reaction L-aspartyl-[protein] + NAD(+) = 4-O-(ADP-D-ribosyl)-L-aspartyl-[protein] + nicotinamide. Is inhibited by Tenovin-6 in vitro, but not by nicotinamide. In terms of biological role, catalyzes specifically the mono-ADP-ribosylation of GcvH-L (SAV0324). This activity is dependent on prior lipoylation of the target protein. May be involved in the modulation of the response to host-derived oxidative stress. In contrast to other sirtuin classes, lacks protein deacylase activity, being unable to catalyze delipoylation, debiotinylation, deacetylation and desuccinylation of proteins. In Staphylococcus aureus (strain Mu50 / ATCC 700699), this protein is Protein ADP-ribosyltransferase.